Here is a 283-residue protein sequence, read N- to C-terminus: Bifunctional protein FolD (283 aa).

Residues 166–168 and Ile232 each bind NADP(+); that span reads GAS.

This sequence belongs to the tetrahydrofolate dehydrogenase/cyclohydrolase family. Homodimer.

It carries out the reaction (6R)-5,10-methylene-5,6,7,8-tetrahydrofolate + NADP(+) = (6R)-5,10-methenyltetrahydrofolate + NADPH. The enzyme catalyses (6R)-5,10-methenyltetrahydrofolate + H2O = (6R)-10-formyltetrahydrofolate + H(+). The protein operates within one-carbon metabolism; tetrahydrofolate interconversion. In terms of biological role, catalyzes the oxidation of 5,10-methylenetetrahydrofolate to 5,10-methenyltetrahydrofolate and then the hydrolysis of 5,10-methenyltetrahydrofolate to 10-formyltetrahydrofolate. This is Bifunctional protein FolD from Wigglesworthia glossinidia brevipalpis.